Consider the following 381-residue polypeptide: 1-deoxy-D-xylulose 5-phosphate reductoisomerase (381 aa).

NADPH is bound by residues Ser-10, Gly-11, Ser-12, Ile-13, Gly-36, Lys-37, Asn-38, and Asn-121. Lys-122 lines the 1-deoxy-D-xylulose 5-phosphate pocket. Glu-123 lines the NADPH pocket. A Mn(2+)-binding site is contributed by Asp-147. 1-deoxy-D-xylulose 5-phosphate-binding residues include Ser-148, Glu-149, Ser-173, and His-196. Glu-149 lines the Mn(2+) pocket. Gly-202 contacts NADPH. 4 residues coordinate 1-deoxy-D-xylulose 5-phosphate: Ser-209, Asn-214, Lys-215, and Glu-218. Position 218 (Glu-218) interacts with Mn(2+).

Belongs to the DXR family. It depends on Mg(2+) as a cofactor. The cofactor is Mn(2+).

It carries out the reaction 2-C-methyl-D-erythritol 4-phosphate + NADP(+) = 1-deoxy-D-xylulose 5-phosphate + NADPH + H(+). The protein operates within isoprenoid biosynthesis; isopentenyl diphosphate biosynthesis via DXP pathway; isopentenyl diphosphate from 1-deoxy-D-xylulose 5-phosphate: step 1/6. Functionally, catalyzes the NADPH-dependent rearrangement and reduction of 1-deoxy-D-xylulose-5-phosphate (DXP) to 2-C-methyl-D-erythritol 4-phosphate (MEP). This is 1-deoxy-D-xylulose 5-phosphate reductoisomerase from Geobacillus sp. (strain WCH70).